A 381-amino-acid polypeptide reads, in one-letter code: Gustatory and pheromone receptor 39a, isoform C (381 aa).

Over 1-37 (MDFQPGELCAYYRLCRYLGIFCIDYNPTKKKFRLRRS) the chain is Cytoplasmic. A helical membrane pass occupies residues 38–58 (VLCYIVHFALQAYLVGCISVM). At 59 to 79 (VTYWRRCFKSELTTTGNHFDR) the chain is on the extracellular side. A helical transmembrane segment spans residues 80 to 100 (LVMVIALGILVVQNAWLIWLQ). At 101 to 129 (APHLRIVRQIEFYRRNHLANVRLLLPKRL) the chain is on the cytoplasmic side. The helical transmembrane segment at 130-150 (LWLIIATNVVYMANFIKTCIF) threads the bilayer. Topologically, residues 151–171 (EWLTDASRLFVITSLGFPLRY) are extracellular. A helical membrane pass occupies residues 172-192 (LVTSFTMGTYFCMVHIVRLVL). Residues 193-239 (DWNQSQINAIIDESADLKMTSPNRLRLRVCLEMHDRLMLLCNDEISL) are Cytoplasmic-facing. The chain crosses the membrane as a helical span at residues 240–260 (VYGFIAWLSWMFASLDVTGVI). Residues 261 to 271 (YLTMVIQTKKS) lie on the Extracellular side of the membrane. Residues 272–292 (IVLKLITNVVWLSPTFMTCAA) form a helical membrane-spanning segment. Residues 293–350 (SFMSNRVTIQANKTAKMLTKVPRTGTGLDRMIEKFLLKNLRQKPILTAYGFFALDKST) are Cytoplasmic-facing. The helical transmembrane segment at 351–371 (LFKLFTAIFTYMVILVQFKEM) threads the bilayer. The Extracellular portion of the chain corresponds to 372–381 (ENSTKSINKF). An N-linked (GlcNAc...) asparagine glycan is attached at asparagine 373.

It belongs to the insect chemoreceptor superfamily. Gustatory receptor (GR) family. Gr21a subfamily. Expressed in the adult labellar chemosensory neurons. In larvae, is expressed in neurons of the terminal external chemosensory organ, as well as in the dorsal pharyngeal sense organ.

It localises to the cell membrane. Its function is as follows. Gustatory receptor which mediates acceptance or avoidance behavior, depending on its substrates. Plays a role in sustaining courtship behavior in males, possibly through the reception of a stimulating arrestant pheromone. The chain is Gustatory and pheromone receptor 39a, isoform C (Gr39a) from Drosophila melanogaster (Fruit fly).